The chain runs to 300 residues: Ribonuclease HIII (300 aa).

The RNase H type-2 domain maps to 86–300; sequence RSRIGVDESG…FNEVLGSGNQ (215 aa). Residues D92, E93, and D196 each coordinate a divalent metal cation.

The protein belongs to the RNase HII family. RnhC subfamily. Mn(2+) serves as cofactor. The cofactor is Mg(2+).

The protein resides in the cytoplasm. It carries out the reaction Endonucleolytic cleavage to 5'-phosphomonoester.. Functionally, endonuclease that specifically degrades the RNA of RNA-DNA hybrids. This is Ribonuclease HIII from Chlamydia trachomatis serovar A (strain ATCC VR-571B / DSM 19440 / HAR-13).